Consider the following 304-residue polypeptide: Olfactory receptor 4K13 (304 aa).

Over 1 to 25 (MERANHSVVSEFILLGLSKSQNLQI) the chain is Extracellular. N5 is a glycosylation site (N-linked (GlcNAc...) asparagine). The chain crosses the membrane as a helical span at residues 26 to 49 (LFFLGFSVVFVGIVLGNLLILVTV). The Cytoplasmic segment spans residues 50-57 (TFDSLLHT). The helical transmembrane segment at 58 to 79 (PMYFLLSNLSCIDMILASFATP) threads the bilayer. The Extracellular portion of the chain corresponds to 80–100 (KMIVDFLRERKTISWWGCYSQ). A disulfide bridge links C97 with C189. The helical transmembrane segment at 101–120 (MFFMHLLGGSEMMLLVAMAI) threads the bilayer. The Cytoplasmic segment spans residues 121–139 (DRYVAICKPLHYMTIMSPR). Residues 140–158 (VLTGLLLSSYAVGFVHSSS) traverse the membrane as a helical segment. At 159 to 195 (QMAFMLTLPFCGPNVIDSFFCDLPLVIKLACKDTYIL) the chain is on the extracellular side. Residues 196 to 219 (QLLVIADSGLLSLVCFLLLLVSYG) form a helical membrane-spanning segment. Residues 220–235 (VIIFSVRYRAASRSSK) are Cytoplasmic-facing. Residues 236-258 (AFSTLSAHITVVTLFFAPCVFIY) form a helical membrane-spanning segment. Topologically, residues 259–269 (VWPFSRYSVDK) are extracellular. Residues 270-289 (ILSVFYTIFTPLLNPIIYTL) form a helical membrane-spanning segment. Over 290–304 (RNQEVKAAIKKRLCI) the chain is Cytoplasmic.

The protein belongs to the G-protein coupled receptor 1 family.

It is found in the cell membrane. Functionally, odorant receptor. In Homo sapiens (Human), this protein is Olfactory receptor 4K13 (OR4K13).